Reading from the N-terminus, the 487-residue chain is Glutamyl-tRNA(Gln) amidotransferase subunit A (487 aa).

Residues lysine 75 and serine 150 each act as charge relay system in the active site. The active-site Acyl-ester intermediate is the serine 174.

This sequence belongs to the amidase family. GatA subfamily. In terms of assembly, heterotrimer of A, B and C subunits.

The catalysed reaction is L-glutamyl-tRNA(Gln) + L-glutamine + ATP + H2O = L-glutaminyl-tRNA(Gln) + L-glutamate + ADP + phosphate + H(+). In terms of biological role, allows the formation of correctly charged Gln-tRNA(Gln) through the transamidation of misacylated Glu-tRNA(Gln) in organisms which lack glutaminyl-tRNA synthetase. The reaction takes place in the presence of glutamine and ATP through an activated gamma-phospho-Glu-tRNA(Gln). The chain is Glutamyl-tRNA(Gln) amidotransferase subunit A from Syntrophomonas wolfei subsp. wolfei (strain DSM 2245B / Goettingen).